We begin with the raw amino-acid sequence, 240 residues long: NADPH-flavin oxidoreductase (240 aa).

Residues 11-15, serine 39, 67-69, 128-131, and 167-169 contribute to the FMN site; these read HRSIR, QAY, YIGG, and KPR.

It belongs to the flavin oxidoreductase frp family. As to quaternary structure, homodimer.

It catalyses the reaction FMNH2 + NADP(+) = FMN + NADPH + 2 H(+). Catalyzes the NADPH-dependent reduction of FMN to FMNH(2). Involved in bioluminescence by providing FMNH(2) to luciferase. The protein is NADPH-flavin oxidoreductase of Vibrio harveyi (Beneckea harveyi).